Consider the following 207-residue polypeptide: Thymidylate kinase (207 aa).

The disordered stretch occupies residues 11–49 (EGIDGSGKSTQARRLAEHLRDTGRDPLLTREPGGSPGAE). Position 12–19 (12–19 (GIDGSGKS)) interacts with ATP. Basic and acidic residues predominate over residues 24 to 38 (RLAEHLRDTGRDPLL).

Belongs to the thymidylate kinase family.

It carries out the reaction dTMP + ATP = dTDP + ADP. Its function is as follows. Phosphorylation of dTMP to form dTDP in both de novo and salvage pathways of dTTP synthesis. This is Thymidylate kinase from Dinoroseobacter shibae (strain DSM 16493 / NCIMB 14021 / DFL 12).